Reading from the N-terminus, the 453-residue chain is tRNA modification GTPase MnmE (453 aa).

The (6S)-5-formyl-5,6,7,8-tetrahydrofolate site is built by arginine 22, glutamate 79, and lysine 119. The TrmE-type G domain maps to glycine 215–glycine 376. Residue asparagine 225 coordinates K(+). Residues asparagine 225 to serine 230, threonine 244 to threonine 250, aspartate 269 to glycine 272, and asparagine 334 to aspartate 337 each bind GTP. Residue serine 229 participates in Mg(2+) binding. K(+) contacts are provided by threonine 244, isoleucine 246, and threonine 249. Threonine 250 contacts Mg(2+). Lysine 453 is a binding site for (6S)-5-formyl-5,6,7,8-tetrahydrofolate.

This sequence belongs to the TRAFAC class TrmE-Era-EngA-EngB-Septin-like GTPase superfamily. TrmE GTPase family. As to quaternary structure, homodimer. Heterotetramer of two MnmE and two MnmG subunits. K(+) is required as a cofactor.

The protein localises to the cytoplasm. Its function is as follows. Exhibits a very high intrinsic GTPase hydrolysis rate. Involved in the addition of a carboxymethylaminomethyl (cmnm) group at the wobble position (U34) of certain tRNAs, forming tRNA-cmnm(5)s(2)U34. This chain is tRNA modification GTPase MnmE, found in Aeromonas salmonicida (strain A449).